The primary structure comprises 273 residues: Ribosomal RNA small subunit methyltransferase A (273 aa).

6 residues coordinate S-adenosyl-L-methionine: N18, L20, G45, E66, D91, and N113.

Belongs to the class I-like SAM-binding methyltransferase superfamily. rRNA adenine N(6)-methyltransferase family. RsmA subfamily.

It localises to the cytoplasm. The catalysed reaction is adenosine(1518)/adenosine(1519) in 16S rRNA + 4 S-adenosyl-L-methionine = N(6)-dimethyladenosine(1518)/N(6)-dimethyladenosine(1519) in 16S rRNA + 4 S-adenosyl-L-homocysteine + 4 H(+). Its function is as follows. Specifically dimethylates two adjacent adenosines (A1518 and A1519) in the loop of a conserved hairpin near the 3'-end of 16S rRNA in the 30S particle. May play a critical role in biogenesis of 30S subunits. In Escherichia fergusonii (strain ATCC 35469 / DSM 13698 / CCUG 18766 / IAM 14443 / JCM 21226 / LMG 7866 / NBRC 102419 / NCTC 12128 / CDC 0568-73), this protein is Ribosomal RNA small subunit methyltransferase A.